Here is a 394-residue protein sequence, read N- to C-terminus: GTPase Obg (394 aa).

In terms of domain architecture, Obg spans S4–L162. The OBG-type G domain maps to A163–N329. Residues G169–S176, F194–E198, D216–G219, T283–D286, and S310–V312 each bind GTP. Positions 176 and 196 each coordinate Mg(2+). Positions K358–K394 are disordered. Over residues G361–K394 the composition is skewed to acidic residues.

This sequence belongs to the TRAFAC class OBG-HflX-like GTPase superfamily. OBG GTPase family. In terms of assembly, monomer. It depends on Mg(2+) as a cofactor.

The protein resides in the cytoplasm. In terms of biological role, an essential GTPase which binds GTP, GDP and possibly (p)ppGpp with moderate affinity, with high nucleotide exchange rates and a fairly low GTP hydrolysis rate. Plays a role in control of the cell cycle, stress response, ribosome biogenesis and in those bacteria that undergo differentiation, in morphogenesis control. This chain is GTPase Obg, found in Phocaeicola vulgatus (strain ATCC 8482 / DSM 1447 / JCM 5826 / CCUG 4940 / NBRC 14291 / NCTC 11154) (Bacteroides vulgatus).